The chain runs to 204 residues: Thymidine kinase (204 aa).

ATP contacts are provided by residues Gly15–Ser22 and Asp88–Gln91. Glu89 (proton acceptor) is an active-site residue. Residues Cys145, Cys148, Cys183, and Cys186 each contribute to the Zn(2+) site.

Belongs to the thymidine kinase family. As to quaternary structure, homotetramer.

Its subcellular location is the cytoplasm. It carries out the reaction thymidine + ATP = dTMP + ADP + H(+). The sequence is that of Thymidine kinase from Halalkalibacterium halodurans (strain ATCC BAA-125 / DSM 18197 / FERM 7344 / JCM 9153 / C-125) (Bacillus halodurans).